The sequence spans 908 residues: Mycobactin import ATP-binding/permease protein IrtA (908 aa).

The Cytoplasmic segment spans residues 1–329 (MARGFQGVML…SRLLAPLKKP (329 aa)). The region spanning 15–124 (ARDHQATVVD…MGSRGFSVPE (110 aa)) is the FAD-binding FR-type domain. Positions 16-245 (RDHQATVVDK…AQAYWTEGRA (230 aa)) are siderophore interaction domain. Residues 70–73 (RAYT), 87–91 (DMVLH), 97–98 (AS), and 241–243 (TEG) each bind FAD. The disordered stretch occupies residues 245–311 (AMGSSRGETS…GAAQPRTPVR (67 aa)). A compositionally biased stretch (low complexity) spans 253-309 (TSTPAKPAAKTAPAKAAAKPAAASGAGTPEHAAAPAAATTGAPQAAPAPGAAQPRTP). A helical membrane pass occupies residues 330 to 350 (LIVSGVLQALITLIELAPFVL). In terms of domain architecture, ABC transmembrane type-1 spans 331–613 (IVSGVLQALI…IGYGLSGIQT (283 aa)). Residues 351–371 (LVELARLLLGGAEAERLWTLG) lie on the Periplasmic side of the membrane. The helical transmembrane segment at 372–392 (LTAVSLIGLGAVLAAAMTLWL) threads the bilayer. Residues 393 to 444 (HRVDARFAHELRGRLLTKLSRLPLGWFTRRGSASTKQLVQDDTLALHYLITH) lie on the Cytoplasmic side of the membrane. The chain crosses the membrane as a helical span at residues 445–465 (AIPDAVAAVVAPVAVLVYLFV). At 466–469 (ADWR) the chain is on the periplasmic side. Residues 470–490 (VALVLFIPVLVYLVLMSVMTI) form a helical membrane-spanning segment. Topologically, residues 491–557 (QSGSKIAQAP…PFVGKKTLMD (67 aa)) are cytoplasmic. A helical transmembrane segment spans residues 558–578 (LVTRPATFLWIILVAGVPLVV). At 579-586 (TGRMDPVN) the chain is on the periplasmic side. A helical membrane pass occupies residues 587-607 (LLPFLLLGTTFGARLLGIGYG). Residues 608 to 908 (LSGIQTGMLA…VSADAVEVGR (301 aa)) are Cytoplasmic-facing. The ABC transporter domain maps to 654–887 (VELDRVSFEY…GGRYRGLWDS (234 aa)). 687 to 694 (GPSGSGKS) provides a ligand contact to ATP.

This sequence belongs to the ABC transporter superfamily. Siderophore-Fe(3+) uptake transporter (SIUT) (TC 3.A.1.21) family. As to quaternary structure, forms a heterodimer with IrtB. FAD serves as cofactor.

The protein resides in the cell inner membrane. Its activity is regulated as follows. The ATPase activity of IrtAB is stimulated more than 38-fold in the presence of Fe-MBT, and more than 10-fold in the presence of Fe-cMBT. In terms of biological role, part of the ABC transporter complex IrtAB involved in the import of iron-bound mycobactin (Fe-MBT) and carboxymycobactin (Fe-cMBT). Has a preference for Fe-MBT over Fe-cMBT. Mycobactins are then reduced by the siderophore interaction domain to facilitate iron release in the bacterial cell. Transmembrane domains (TMD) form a pore in the membrane and the ATP-binding domain (NBD) is responsible for energy generation. The polypeptide is Mycobactin import ATP-binding/permease protein IrtA (Mycolicibacterium thermoresistibile (strain ATCC 19527 / DSM 44167 / CIP 105390 / JCM 6362 / NCTC 10409 / 316) (Mycobacterium thermoresistibile)).